The chain runs to 363 residues: D-alanine--D-alanine ligase (363 aa).

In terms of domain architecture, ATP-grasp spans 148 to 353 (KKLLAAEGLP…YGTLVSTLIE (206 aa)). 176–231 (RERLGLPVFVKPARAGSSIGITKVDDWAALDTAIAAAREHDPKVIVEAGIVGREVE) lines the ATP pocket. Mg(2+)-binding residues include Asp-308, Glu-320, and Asn-322.

This sequence belongs to the D-alanine--D-alanine ligase family. Mg(2+) serves as cofactor. Requires Mn(2+) as cofactor.

It localises to the cytoplasm. It catalyses the reaction 2 D-alanine + ATP = D-alanyl-D-alanine + ADP + phosphate + H(+). It participates in cell wall biogenesis; peptidoglycan biosynthesis. Its function is as follows. Cell wall formation. The sequence is that of D-alanine--D-alanine ligase from Nocardia farcinica (strain IFM 10152).